The primary structure comprises 202 residues: dITP/XTP pyrophosphatase (202 aa).

A substrate-binding site is contributed by 11-16; that stretch reads TNNANK. Asp73 (proton acceptor) is an active-site residue. Residue Asp73 coordinates Mg(2+). Residues Ser74, 155–158, Lys178, and 183–184 contribute to the substrate site; these read FGYD and HR.

The protein belongs to the HAM1 NTPase family. Homodimer. It depends on Mg(2+) as a cofactor.

The enzyme catalyses XTP + H2O = XMP + diphosphate + H(+). It catalyses the reaction dITP + H2O = dIMP + diphosphate + H(+). The catalysed reaction is ITP + H2O = IMP + diphosphate + H(+). Functionally, pyrophosphatase that catalyzes the hydrolysis of nucleoside triphosphates to their monophosphate derivatives, with a high preference for the non-canonical purine nucleotides XTP (xanthosine triphosphate), dITP (deoxyinosine triphosphate) and ITP. Seems to function as a house-cleaning enzyme that removes non-canonical purine nucleotides from the nucleotide pool, thus preventing their incorporation into DNA/RNA and avoiding chromosomal lesions. In Lactiplantibacillus plantarum (strain ATCC BAA-793 / NCIMB 8826 / WCFS1) (Lactobacillus plantarum), this protein is dITP/XTP pyrophosphatase.